The sequence spans 313 residues: Ribosomal RNA small subunit methyltransferase H (313 aa).

S-adenosyl-L-methionine-binding positions include 35–37, Asp-55, Phe-79, Asp-101, and Gln-108; that span reads GGH.

The protein belongs to the methyltransferase superfamily. RsmH family.

Its subcellular location is the cytoplasm. It carries out the reaction cytidine(1402) in 16S rRNA + S-adenosyl-L-methionine = N(4)-methylcytidine(1402) in 16S rRNA + S-adenosyl-L-homocysteine + H(+). In terms of biological role, specifically methylates the N4 position of cytidine in position 1402 (C1402) of 16S rRNA. This is Ribosomal RNA small subunit methyltransferase H from Shigella dysenteriae serotype 1 (strain Sd197).